The sequence spans 1096 residues: Protein spire (1096 aa).

2 disordered regions span residues 1–79 (MTEH…GNGT) and 184–211 (VESQEQEASQQEQQQKQPQMDDSATSSV). Positions 37 to 51 (LSTSPDSANGDAQQA) are enriched in polar residues. The segment covering 53–65 (THTHIISHTHSKG) has biased composition (basic residues). Composition is skewed to low complexity over residues 66-77 (AAKTQTQTQNGN) and 189-201 (QEASQQEQQQKQP). One can recognise a KIND domain in the interval 111–366 (VTLNNILDSF…RALATETIEL (256 aa)). Residues 315-340 (KRWDDEAEEERNDTKELEHIIETCRN) are a coiled coil. WH2 domains follow at residues 436-454 (PYEILMGDIRAKKYQLRKV) and 500-517 (PREQLMESIRQGKELKQI). 3 disordered regions span residues 560 to 588 (DDSSMSSSHSTAATHQHHQQHQPHHAHLA), 614 to 656 (QECQ…PSFT), and 693 to 762 (QSNL…LGPW). Basic residues predominate over residues 574–585 (HQHHQQHQPHHA). Composition is skewed to low complexity over residues 633–645 (APRQTLPQPQAQA) and 714–725 (DAGSQSQSGASS). The span at 737 to 754 (EGDHSQTTDGPPRLDEAH) shows a compositional bias: basic and acidic residues. The tract at residues 780 to 800 (LSVTLAEIVHIRSVMTKAELE) is spir-box. Residues 874-894 (PASSSTPSPSHHAHQAHSSST) are compositionally biased toward low complexity. 3 disordered regions span residues 874 to 899 (PASSSTPSPSHHAHQAHSSSTGNIMD), 912 to 958 (RSES…APGH), and 997 to 1021 (RSMEGPRSLPVHSPAYRPLSNSSTL). A compositionally biased stretch (polar residues) spans 921–941 (STVGSAPSSPKHQRSNMSTPG).

It belongs to the spire family. In terms of assembly, interacts with bsk, Rho1, Rac1, Cdc42 and wash. Interacts with capu. In terms of processing, phosphorylated by Jnk kinase (bsk).

The protein localises to the cytoplasm. It is found in the cytoskeleton. It localises to the perinuclear region. Its subcellular location is the cell membrane. The protein resides in the cytoplasmic vesicle membrane. Acts as an actin nucleation factor, remains associated with the slow-growing pointed end of the new filament. Promotes dissociation of capu from the barbed end of actin filaments. Involved in intracellular vesicle transport along actin fibers, providing a novel link between actin cytoskeleton dynamics and intracellular transport. Required for localization of determinants within the developing oocyte to the posterior pole and to the dorsal anterior corner. Links Rho family signaling and Jnk function to the actin cytoskeleton. The polypeptide is Protein spire (Drosophila pseudoobscura pseudoobscura (Fruit fly)).